The chain runs to 211 residues: Thiamine-phosphate synthase (211 aa).

4-amino-2-methyl-5-(diphosphooxymethyl)pyrimidine is bound by residues 38-42 (QLREK) and Asn70. Positions 71 and 90 each coordinate Mg(2+). Position 109 (Ser109) interacts with 4-amino-2-methyl-5-(diphosphooxymethyl)pyrimidine. 135–137 (TST) contributes to the 2-[(2R,5Z)-2-carboxy-4-methylthiazol-5(2H)-ylidene]ethyl phosphate binding site. Lys138 contributes to the 4-amino-2-methyl-5-(diphosphooxymethyl)pyrimidine binding site. Residues Gly165 and 185-186 (IS) contribute to the 2-[(2R,5Z)-2-carboxy-4-methylthiazol-5(2H)-ylidene]ethyl phosphate site.

This sequence belongs to the thiamine-phosphate synthase family. Requires Mg(2+) as cofactor.

It carries out the reaction 2-[(2R,5Z)-2-carboxy-4-methylthiazol-5(2H)-ylidene]ethyl phosphate + 4-amino-2-methyl-5-(diphosphooxymethyl)pyrimidine + 2 H(+) = thiamine phosphate + CO2 + diphosphate. The enzyme catalyses 2-(2-carboxy-4-methylthiazol-5-yl)ethyl phosphate + 4-amino-2-methyl-5-(diphosphooxymethyl)pyrimidine + 2 H(+) = thiamine phosphate + CO2 + diphosphate. The catalysed reaction is 4-methyl-5-(2-phosphooxyethyl)-thiazole + 4-amino-2-methyl-5-(diphosphooxymethyl)pyrimidine + H(+) = thiamine phosphate + diphosphate. The protein operates within cofactor biosynthesis; thiamine diphosphate biosynthesis; thiamine phosphate from 4-amino-2-methyl-5-diphosphomethylpyrimidine and 4-methyl-5-(2-phosphoethyl)-thiazole: step 1/1. Condenses 4-methyl-5-(beta-hydroxyethyl)thiazole monophosphate (THZ-P) and 2-methyl-4-amino-5-hydroxymethyl pyrimidine pyrophosphate (HMP-PP) to form thiamine monophosphate (TMP). This Clostridium acetobutylicum (strain ATCC 824 / DSM 792 / JCM 1419 / IAM 19013 / LMG 5710 / NBRC 13948 / NRRL B-527 / VKM B-1787 / 2291 / W) protein is Thiamine-phosphate synthase.